A 258-amino-acid chain; its full sequence is Dihydroorotate dehydrogenase B (NAD(+)), electron transfer subunit (258 aa).

One can recognise an FAD-binding FR-type domain in the interval 1–101 (MKKAYLTVVS…LGPLGNGYDP (101 aa)). FAD is bound by residues 52–55 (RPIS), 69–71 (IYR), and 76–77 (GT). 4 residues coordinate [2Fe-2S] cluster: cysteine 220, cysteine 225, cysteine 228, and cysteine 243.

The protein belongs to the PyrK family. Heterotetramer of 2 PyrK and 2 PyrD type B subunits. Requires [2Fe-2S] cluster as cofactor. The cofactor is FAD.

It functions in the pathway pyrimidine metabolism; UMP biosynthesis via de novo pathway; orotate from (S)-dihydroorotate (NAD(+) route): step 1/1. Responsible for channeling the electrons from the oxidation of dihydroorotate from the FMN redox center in the PyrD type B subunit to the ultimate electron acceptor NAD(+). The protein is Dihydroorotate dehydrogenase B (NAD(+)), electron transfer subunit of Bacillus pumilus (strain SAFR-032).